Consider the following 60-residue polypeptide: Large ribosomal subunit protein uL30 (60 aa).

The protein belongs to the universal ribosomal protein uL30 family. As to quaternary structure, part of the 50S ribosomal subunit.

This chain is Large ribosomal subunit protein uL30, found in Cutibacterium acnes (strain DSM 16379 / KPA171202) (Propionibacterium acnes).